Reading from the N-terminus, the 563-residue chain is Membrane protein insertase YidC (563 aa).

A helical membrane pass occupies residues Thr-6 to His-26. The interval Pro-36 to Ala-70 is disordered. A compositionally biased stretch (low complexity) spans Ala-54–Ala-70. The next 4 helical transmembrane spans lie at Trp-373–Ala-393, Leu-443–Val-463, Pro-482–Pro-502, and Val-512–Val-532.

The protein belongs to the OXA1/ALB3/YidC family. Type 1 subfamily. In terms of assembly, interacts with the Sec translocase complex via SecD. Specifically interacts with transmembrane segments of nascent integral membrane proteins during membrane integration.

Its subcellular location is the cell membrane. Required for the insertion and/or proper folding and/or complex formation of integral membrane proteins into the membrane. Involved in integration of membrane proteins that insert both dependently and independently of the Sec translocase complex, as well as at least some lipoproteins. Aids folding of multispanning membrane proteins. The polypeptide is Membrane protein insertase YidC (Bordetella bronchiseptica (strain ATCC BAA-588 / NCTC 13252 / RB50) (Alcaligenes bronchisepticus)).